Here is a 155-residue protein sequence, read N- to C-terminus: Small ribosomal subunit protein uS7cz/uS7cy (155 aa).

Belongs to the universal ribosomal protein uS7 family. In terms of assembly, part of the 30S ribosomal subunit.

The protein localises to the plastid. Its subcellular location is the chloroplast. In terms of biological role, one of the primary rRNA binding proteins, it binds directly to 16S rRNA where it nucleates assembly of the head domain of the 30S subunit. The sequence is that of Small ribosomal subunit protein uS7cz/uS7cy (rps7-A) from Ceratophyllum demersum (Rigid hornwort).